A 236-amino-acid polypeptide reads, in one-letter code: Cytochrome b-c1 complex subunit Rieske-4, mitochondrial (236 aa).

The N-terminal 24 residues, 1–24, are a transit peptide targeting the mitochondrion; sequence MINFGSCWGLASVTSNSFSIISGF. At 25–73 the chain is on the mitochondrial matrix side; that stretch reads SSNSVSHAHDMGLVPDLPPTVAAIKNPTSKIVYDEHNHERYPPGDPSKR. Residues 74 to 96 traverse the membrane as a helical segment; the sequence is AFAYFVLTGGRFVYASLVRLLIL. Topologically, residues 97 to 236 are mitochondrial intermembrane; that stretch reads KFVLSMSASK…FLEENKLLIG (140 aa). In terms of domain architecture, Rieske spans 146–234; that stretch reads INLANSVDLG…YSFLEENKLL (89 aa). [2Fe-2S] cluster contacts are provided by Cys-179, His-181, Cys-198, and His-201. A disulfide bridge links Cys-184 with Cys-200.

It belongs to the Rieske iron-sulfur protein family. Component of the ubiquinol-cytochrome c oxidoreductase (cytochrome b-c1 complex, complex III, CIII), a multisubunit enzyme composed of 3 respiratory subunits cytochrome b, cytochrome c1 and Rieske protein, 2 core protein subunits, and several low-molecular weight protein subunits. The complex exists as an obligatory dimer and forms supercomplexes (SCs) in the inner mitochondrial membrane with cytochrome c oxidase (complex IV, CIV). [2Fe-2S] cluster is required as a cofactor.

Its subcellular location is the mitochondrion inner membrane. It catalyses the reaction a quinol + 2 Fe(III)-[cytochrome c](out) = a quinone + 2 Fe(II)-[cytochrome c](out) + 2 H(+)(out). In terms of biological role, component of the ubiquinol-cytochrome c oxidoreductase, a multisubunit transmembrane complex that is part of the mitochondrial electron transport chain which drives oxidative phosphorylation. The respiratory chain contains 3 multisubunit complexes succinate dehydrogenase (complex II, CII), ubiquinol-cytochrome c oxidoreductase (cytochrome b-c1 complex, complex III, CIII) and cytochrome c oxidase (complex IV, CIV), that cooperate to transfer electrons derived from NADH and succinate to molecular oxygen, creating an electrochemical gradient over the inner membrane that drives transmembrane transport and the ATP synthase. The cytochrome b-c1 complex catalyzes electron transfer from ubiquinol to cytochrome c, linking this redox reaction to translocation of protons across the mitochondrial inner membrane, with protons being carried across the membrane as hydrogens on the quinol. In the process called Q cycle, 2 protons are consumed from the matrix, 4 protons are released into the intermembrane space and 2 electrons are passed to cytochrome c. The Rieske protein is a catalytic core subunit containing a [2Fe-2S] iron-sulfur cluster. It cycles between 2 conformational states during catalysis to transfer electrons from the quinol bound in the Q(0) site in cytochrome b to cytochrome c1. This Nicotiana tabacum (Common tobacco) protein is Cytochrome b-c1 complex subunit Rieske-4, mitochondrial.